A 209-amino-acid polypeptide reads, in one-letter code: tRNA (guanine-N(7)-)-methyltransferase (209 aa).

S-adenosyl-L-methionine-binding residues include Asp35, Glu60, Asn87, and Asp113. Asp113 is an active-site residue. 2 residues coordinate substrate: Lys117 and Asp149.

The protein belongs to the class I-like SAM-binding methyltransferase superfamily. TrmB family.

It carries out the reaction guanosine(46) in tRNA + S-adenosyl-L-methionine = N(7)-methylguanosine(46) in tRNA + S-adenosyl-L-homocysteine. It participates in tRNA modification; N(7)-methylguanine-tRNA biosynthesis. Functionally, catalyzes the formation of N(7)-methylguanine at position 46 (m7G46) in tRNA. In Prochlorococcus marinus subsp. pastoris (strain CCMP1986 / NIES-2087 / MED4), this protein is tRNA (guanine-N(7)-)-methyltransferase.